A 30-amino-acid chain; its full sequence is rRNA N-glycosylase (30 aa).

The protein belongs to the ribosome-inactivating protein family. Type 1 RIP subfamily. Expressed in seeds.

It catalyses the reaction Endohydrolysis of the N-glycosidic bond at one specific adenosine on the 28S rRNA.. Its function is as follows. Exhibits N-glycosylase activity. Catalyzes the release of one adenine from a ribosome. Acts as a ribosome-inactivating protein and inhibits protein synthesis in a rabbit-reticulocyte lysate system and in various cell lines (in vitro). In Saponaria ocymoides (Rock soapwort), this protein is rRNA N-glycosylase.